The chain runs to 204 residues: MNFKYIVAVSILIASAYARSEENDIQSLSQRDVLEEESLREIRGIGASILSAGKSALKGLAKGLAEHFANGKRTAEDHEVMKRLEAAIQSLSQRDVLEEESLREIRGIGASILSAGKSALKGLAKGLAEHFANGKRTAEEHEVMKRLEAVMRDLDSLDYPEEASEMETRSFNQEEIANLYTKKEKRILGPILGLVSNALGGLLG.

A signal peptide (or 18) is located at residues 1 to 16 (MNFKYIVAVSILIASA). N70 and N133 each carry asparagine amide.

This sequence belongs to the bombinin family. In terms of tissue distribution, expressed by the skin glands.

The protein resides in the secreted. Functionally, has antimicrobial activity, but no hemolytic activity. Preference on killing Gram-negative non-enteric bacteria. This is Bombinin-like peptides 1 from Bombina orientalis (Oriental fire-bellied toad).